The sequence spans 716 residues: Protein C-mannosyl-transferase DPY19L3 (716 aa).

Over 1-43 (MMSIRQRREIRATEVSEDFPAQEENVKLENKLPSGCTSRRLWK) the chain is Cytoplasmic. A helical transmembrane segment spans residues 44 to 64 (ILSLTIGGTIALCIGLLTSVY). Topologically, residues 65–154 (LATLHENDLW…RVLPIQKYLE (90 aa)) are lumenal. N-linked (GlcNAc...) asparagine glycosylation is present at Asn118. The helical transmembrane segment at 155-182 (PVYFYIYTLFGLQAIYVTALYITSWLLS) threads the bilayer. The Cytoplasmic segment spans residues 183–184 (GT). The name=3 intramembrane region spans 185 to 197 (WLSGLLAAFWYVT). Topologically, residues 198 to 215 (NRIDTTRVEFTIPLRENW) are cytoplasmic. Residues 216-230 (ALPFFAIQIAAITYF) constitute an intramembrane region (name=4). The Cytoplasmic portion of the chain corresponds to 231–239 (LRPNLQPLS). Residues 240–256 (ERLTLLAIFISTFLFSL) traverse the membrane as a helical segment. Residues 257–262 (TWQFNQ) are Lumenal-facing. The chain crosses the membrane as a helical span at residues 263–279 (FMMLMQALVLFTLDSLD). Residues 280-289 (MLPAVKATWL) lie on the Cytoplasmic side of the membrane. A helical transmembrane segment spans residues 290–306 (YGIQITSLLLVCILQFF). Topologically, residues 307–308 (NS) are lumenal. A helical membrane pass occupies residues 309-323 (MILGSLLISFNLSVF). Residues 324 to 338 (IARKLQKNLKTGSFL) are Cytoplasmic-facing. The helical transmembrane segment at 339-359 (NRLGKLLLHLFMVLCLTLFLN) threads the bilayer. The Lumenal segment spans residues 360–414 (NIIKKILNLKSDEHIFKFLKAKFGLGATRDFDANLYLCEEAFGLLPFNTFGRLSD). Residues 415-437 (TLLFYAYIFVLSITVIVAFVVAF) traverse the membrane as a helical segment. At 438 to 465 (HNLSDSTNQQSVGKMEKGTVDLKPETAY) the chain is on the cytoplasmic side. A helical membrane pass occupies residues 466–485 (NLIHTILFGFLALSTMRMKY). The Lumenal segment spans residues 486–487 (LW). Residues 488-499 (TSHMCVFASFGL) form a helical membrane-spanning segment. At 500–522 (CSPEIWELLLKSVHLYNPKRICI) the chain is on the cytoplasmic side. The helical transmembrane segment at 523–539 (MRYSVPILILLYLCYKF) threads the bilayer. Over 540–716 (WPGMMDELSE…FHVYKLSRNK (177 aa)) the chain is Lumenal. Asn704 carries an N-linked (GlcNAc...) asparagine glycan.

Belongs to the dpy-19 family. As to expression, widely expressed.

It localises to the endoplasmic reticulum membrane. It carries out the reaction L-tryptophyl-[protein] + a di-trans,poly-cis-dolichyl beta-D-mannosyl phosphate = C-alpha-D-mannosyl-L-tryptophyl-[protein] + a di-trans,poly-cis-dolichyl phosphate + H(+). Its pathway is protein modification; protein glycosylation. C-mannosyltransferase that mediates C-mannosylation of tryptophan residues on target proteins. The reaction occurs on the luminal side of the endoplasmic reticulum and involves the transfer of a mannose unit from a dolichylphosphate mannose (Dol-P-Man) donor to an acceptor protein containing a WxxW or WxxC consensus sequence. C-mannosylates RSPO1, a Wnt signaling regulator, preferentially at the first Trp residue in the sequence WxxW. C-mannosylates the netrin receptor UNC5A, preferentially at the third tryptophan of WxxWxxWxxC sequence. In terms of biological role, has no C-mannosyltransferase activity. The protein is Protein C-mannosyl-transferase DPY19L3 (DPY19L3) of Homo sapiens (Human).